Reading from the N-terminus, the 415-residue chain is Calcium/calmodulin-dependent serine/threonine-protein kinase (415 aa).

One can recognise a Protein kinase domain in the interval Tyr-12 to Val-308. ATP contacts are provided by residues Leu-18–Val-26 and Lys-46. Residue Asp-173 is the Proton acceptor of the active site. The segment at Met-318–Ser-328 is calmodulin-binding.

The protein belongs to the protein kinase superfamily. CAMK Ser/Thr protein kinase family. CaMK subfamily.

The enzyme catalyses L-seryl-[protein] + ATP = O-phospho-L-seryl-[protein] + ADP + H(+). It catalyses the reaction L-threonyl-[protein] + ATP = O-phospho-L-threonyl-[protein] + ADP + H(+). May be involved in signal transduction processes. This chain is Calcium/calmodulin-dependent serine/threonine-protein kinase, found in Malus domestica (Apple).